Consider the following 103-residue polypeptide: Small ribosomal subunit protein uS10 (103 aa).

The protein belongs to the universal ribosomal protein uS10 family. As to quaternary structure, part of the 30S ribosomal subunit.

In terms of biological role, involved in the binding of tRNA to the ribosomes. This Chlorobium chlorochromatii (strain CaD3) protein is Small ribosomal subunit protein uS10.